The chain runs to 160 residues: Competence protein ComGD (160 aa).

The chain crosses the membrane as a helical span at residues 30 to 50 (AFTMLESLLVLGLVSILALGL).

In terms of assembly, the transformation pili are flexible filaments, consisting mainly of the major pilin ComGC and smaller amounts of the minor pilins, including at least ComGD, ComGF and ComGG, and perhaps ComGE. Interacts with ComGE. Interacts with ComGF. Interacts with ComGG.

It localises to the cell membrane. Its subcellular location is the cell surface. The protein localises to the fimbrium. Required for formation of the type IV-like pilus (T4P) that plays a role in transformation. Transformation pili are dynamically extended and retracted, perhaps thereby promoting DNA uptake and transformation. Involved in transformation. Required for DNA binding. This Streptococcus pneumoniae (strain ATCC BAA-255 / R6) protein is Competence protein ComGD.